We begin with the raw amino-acid sequence, 108 residues long: Large ribosomal subunit protein uL24 (108 aa).

Belongs to the universal ribosomal protein uL24 family. As to quaternary structure, part of the 50S ribosomal subunit.

One of two assembly initiator proteins, it binds directly to the 5'-end of the 23S rRNA, where it nucleates assembly of the 50S subunit. Functionally, one of the proteins that surrounds the polypeptide exit tunnel on the outside of the subunit. The chain is Large ribosomal subunit protein uL24 from Mycoplasma mycoides subsp. mycoides SC (strain CCUG 32753 / NCTC 10114 / PG1).